The following is a 643-amino-acid chain: Phosphomethylpyrimidine synthase (643 aa).

Substrate-binding positions include N248, M277, Y306, H342, 362–364, 403–406, and E442; these read SRG and DGLR. H446 provides a ligand contact to Zn(2+). Residue Y469 coordinates substrate. Zn(2+) is bound at residue H510. [4Fe-4S] cluster is bound by residues C590, C593, and C598.

It belongs to the ThiC family. As to quaternary structure, homodimer. [4Fe-4S] cluster serves as cofactor.

The enzyme catalyses 5-amino-1-(5-phospho-beta-D-ribosyl)imidazole + S-adenosyl-L-methionine = 4-amino-2-methyl-5-(phosphooxymethyl)pyrimidine + CO + 5'-deoxyadenosine + formate + L-methionine + 3 H(+). It functions in the pathway cofactor biosynthesis; thiamine diphosphate biosynthesis. Its function is as follows. Catalyzes the synthesis of the hydroxymethylpyrimidine phosphate (HMP-P) moiety of thiamine from aminoimidazole ribotide (AIR) in a radical S-adenosyl-L-methionine (SAM)-dependent reaction. This chain is Phosphomethylpyrimidine synthase, found in Paraburkholderia xenovorans (strain LB400).